We begin with the raw amino-acid sequence, 873 residues long: Sister chromatid cohesion protein PDS5 homolog C (873 aa).

HEAT repeat units follow at residues 53-92 (NALT…ITAP), 99-136 (DQMK…VAKV), 149-187 (ALLI…ESED), and 189-227 (PSEM…KLKT). Residues 266-301 (NEKEDSQGHIKRETEVEKAAEISTPERTDAPKDESG) show a composition bias toward basic and acidic residues. 2 disordered regions span residues 266-611 (NEKE…LVGS) and 658-873 (SPLD…KRKR). T289 bears the Phosphothreonine mark. A compositionally biased stretch (polar residues) spans 303 to 319 (SGVSNGVAQQNDSSVDT). Over residues 320–334 (DSMKKQDDTGAKDEP) the composition is skewed to basic and acidic residues. Polar residues predominate over residues 336–348 (QLDNPRNTDLNNT). Composition is skewed to basic and acidic residues over residues 349 to 365 (TEEK…KENE) and 373 to 394 (DLSK…DSKD). Polar residues-rich tracts occupy residues 400–411 (PVDSSVTAATSS) and 418–438 (SVQI…SSPS). A compositionally biased stretch (basic and acidic residues) spans 456-466 (KKKESSTEEVK). The segment covering 494–510 (KVASSSKTKPTVPPSKK) has biased composition (low complexity). Basic and acidic residues-rich tracts occupy residues 511-526 (STSE…KKVV) and 535-555 (TKPK…EESL). Acidic residues predominate over residues 661-681 (DESELSQDEEAADQTGQEEDA). Low complexity predominate over residues 701–725 (SSAKKGSGAGSSKAKATPASKSSKT). Over residues 726–746 (SQDDKTASKSKDSKEASREEE) the composition is skewed to basic and acidic residues. Acidic residues predominate over residues 747–757 (ASSEEESEEEE). Low complexity-rich tracts occupy residues 795–814 (KATT…PAKS) and 822–831 (KSGSASTPAS). Positions 844 to 853 (ETPKEPEPAT) are enriched in basic and acidic residues. Positions 854-866 (KAKSGKSQGSQSK) are enriched in low complexity.

Belongs to the PDS5 family. As to quaternary structure, interacts with the cohesin complex.

Its subcellular location is the nucleus. Cohesin cofactor dispensable during the meiotic division but playing an important role in DNA repair by homologous recombination (HR) probably by helping SMC5/SMC6 complex. Regulator of sister chromatid cohesion in mitosis which may stabilize cohesin complex association with chromatin. May couple sister chromatid cohesion during mitosis to DNA replication. Cohesion ensures that chromosome partitioning is accurate in both meiotic and mitotic cells and plays an important role in DNA repair. The polypeptide is Sister chromatid cohesion protein PDS5 homolog C (Arabidopsis thaliana (Mouse-ear cress)).